Consider the following 131-residue polypeptide: Fumarate reductase subunit C (131 aa).

3 consecutive transmembrane segments (helical) span residues 30–50, 63–83, and 109–129; these read EGTAVPAVWFSIELIFGLFAL, FLQNPVIVIINLITLAAALLH, and IIKSLWAVTVVATIVILFVAL.

Belongs to the FrdC family. In terms of assembly, part of an enzyme complex containing four subunits: a flavoprotein (FrdA), an iron-sulfur protein (FrdB), and two hydrophobic anchor proteins (FrdC and FrdD).

The protein resides in the cell inner membrane. Two distinct, membrane-bound, FAD-containing enzymes are responsible for the catalysis of fumarate and succinate interconversion; fumarate reductase is used in anaerobic growth, and succinate dehydrogenase is used in aerobic growth. Anchors the catalytic components of the fumarate reductase complex to the cell inner membrane, binds quinones. This is Fumarate reductase subunit C from Shigella boydii serotype 4 (strain Sb227).